A 398-amino-acid polypeptide reads, in one-letter code: 1-deoxy-D-xylulose 5-phosphate reductoisomerase (398 aa).

Residues T10, G11, S12, I13, N38, and N124 each contribute to the NADPH site. K125 lines the 1-deoxy-D-xylulose 5-phosphate pocket. E126 provides a ligand contact to NADPH. D150 contributes to the Mn(2+) binding site. 4 residues coordinate 1-deoxy-D-xylulose 5-phosphate: S151, E152, S176, and H199. E152 contributes to the Mn(2+) binding site. G205 contacts NADPH. Positions 212, 217, 218, and 221 each coordinate 1-deoxy-D-xylulose 5-phosphate. Residue E221 coordinates Mn(2+).

This sequence belongs to the DXR family. It depends on Mg(2+) as a cofactor. Mn(2+) is required as a cofactor.

It catalyses the reaction 2-C-methyl-D-erythritol 4-phosphate + NADP(+) = 1-deoxy-D-xylulose 5-phosphate + NADPH + H(+). It participates in isoprenoid biosynthesis; isopentenyl diphosphate biosynthesis via DXP pathway; isopentenyl diphosphate from 1-deoxy-D-xylulose 5-phosphate: step 1/6. Catalyzes the NADPH-dependent rearrangement and reduction of 1-deoxy-D-xylulose-5-phosphate (DXP) to 2-C-methyl-D-erythritol 4-phosphate (MEP). The sequence is that of 1-deoxy-D-xylulose 5-phosphate reductoisomerase from Rippkaea orientalis (strain PCC 8801 / RF-1) (Cyanothece sp. (strain PCC 8801)).